The chain runs to 420 residues: Amino acid decarboxylase lolD1 (420 aa).

K62 carries the N6-(pyridoxal phosphate)lysine modification. Pyridoxal 5'-phosphate is bound by residues S194, G231, and 266–269 (EPGT). Position 315-316 (315-316 (IV)) interacts with substrate. C351 functions as the Proton donor; shared with dimeric partner in the catalytic mechanism. Residue C351 is modified to S-nitrosocysteine. D352 contacts substrate. Y381 contributes to the pyridoxal 5'-phosphate binding site.

It belongs to the Orn/Lys/Arg decarboxylase class-II family. Homodimer. Requires pyridoxal 5'-phosphate as cofactor.

It participates in alkaloid biosynthesis. Its function is as follows. Amino acid decarboxylase; part of the gene cluster that mediates the biosynthesis of loline alkaloids, potent insecticidal agents composed of a pyrrolizidine ring system and an uncommon ether bridge linking carbons 2 and 7. Lolines are structurally differentiated by the various modifications of the L-amino group and include norloline, loline, N-methylloline, N-acetylloline, N-acetylnorloline, and N-formylloline. The first committed step is the condensation of O-acetyl-L-homoserine (derived from L-aspartic acid) and L-proline, probably catalyzed by the gamma-type pyridoxal 5'-phosphate(PLP)-dependent enzyme lolC, to give the diamino diacid, NACPP. Ensuing cyclization, decarboxylation, and acetylation steps yield 1-exo-acetamidopyrrolizidine (AcAP). LolO is required for installation of the ether bridge upon the pathway intermediate, 1-exo-acetamidopyrrolizidine (AcAP). In sequential 2-oxoglutarate- and O(2)-consuming steps, lolO removes hydrogens from C2 and C7 of AcAP to form both carbon-oxygen bonds in N-acetylnorloline (NANL), the precursor to all other lolines. The enzymes lolD, lolE, lolF and lolT have also been proposed to be involved in the ether-bridge installation. Further processing of the exocyclic moiety of NANL by fungal N-acetamidase (LolN), methyltransferase (LolM), and cytochrome P450 (LolP) enzymes, with occasional involvement of a plant acetyltransferase, generates the other known lolines. LolN transforms NANL to norlonine which is monomethylated and dimethylated to respectively lonine and N-methyllonine (NML) by lolM. LolP catalyzes hydroxylation of the methyl group in N-methylloline (NML) and further oxygenation to N-formylloline (NFL). A plant acetyltransferase is responsible for the acetylation of loline to form N-acetylloline (NAL). LolA might interact with aspartate kinase to prevent feedback inhibition of its activity by these end products and thereby promote production of L-homoserine from L-aspartate. This chain is Amino acid decarboxylase lolD1, found in Epichloe uncinata (Endophyte fungus).